Here is a 317-residue protein sequence, read N- to C-terminus: Anamorsin homolog (317 aa).

The tract at residues 1-192 (MREVLVVSES…ITGVRPNWKA (192 aa)) is N-terminal SAM-like domain. A linker region spans residues 193–216 (KGDRKSSSIHAAPIDGYISKAPDY). Cysteine 219, cysteine 226, cysteine 229, and cysteine 231 together coordinate [2Fe-2S] cluster. The segment at 219-231 (CSTKPRACANCTC) is fe-S binding site A. 4 residues coordinate [4Fe-4S] cluster: cysteine 286, cysteine 289, cysteine 297, and cysteine 300. 2 consecutive short sequence motifs (cx2C motif) follow at residues 286–289 (CGNC) and 297–300 (CDSC). A fe-S binding site B region spans residues 286–300 (CGNCYLGDAFRCDSC).

It belongs to the anamorsin family. As to quaternary structure, monomer. It depends on [2Fe-2S] cluster as a cofactor. [4Fe-4S] cluster is required as a cofactor.

The protein localises to the cytoplasm. Its subcellular location is the mitochondrion intermembrane space. Component of the cytosolic iron-sulfur (Fe-S) protein assembly (CIA) machinery. Required for the maturation of extramitochondrial Fe-S proteins. Part of an electron transfer chain functioning in an early step of cytosolic Fe-S biogenesis, facilitating the de novo assembly of a [4Fe-4S] cluster on the cytosolic Fe-S scaffold complex. Electrons are transferred from NADPH via a FAD- and FMN-containing diflavin oxidoreductase. Together with the diflavin oxidoreductase, also required for the assembly of the diferric tyrosyl radical cofactor of ribonucleotide reductase (RNR), probably by providing electrons for reduction during radical cofactor maturation in the catalytic small subunit. The polypeptide is Anamorsin homolog (Theileria parva (East coast fever infection agent)).